Reading from the N-terminus, the 432-residue chain is G-protein coupled receptor 22 (432 aa).

Residues 1 to 45 (MCFSPVLEINMQSESNVTVRDDIDDIDTNMYQPLSYPLSFQVSLT) are Extracellular-facing. A glycan (N-linked (GlcNAc...) asparagine) is linked at Asn-16. A helical membrane pass occupies residues 46–66 (GFLMLEIVLGLGSNLTVLVLY). Residues 67 to 85 (CMKSNLINSVSNIITMNLH) are Cytoplasmic-facing. A helical transmembrane segment spans residues 86 to 106 (VLDVIICVGCIPLTIVILLLS). Residues 107 to 115 (LESNTALIC) are Extracellular-facing. A helical transmembrane segment spans residues 116–136 (CFHEACVSFASVSTAINVFAI). The Cytoplasmic segment spans residues 137 to 156 (TLDRYDISVKPANRILTMGR). A helical membrane pass occupies residues 157-177 (AVMLMTSIWIFSFFSFLIPFI). At 178-208 (EVNFFSLQSGNTWANKTLLCVSTSEYYTELG) the chain is on the extracellular side. N-linked (GlcNAc...) asparagine glycosylation is present at Asn-192. The helical transmembrane segment at 209-229 (MYYHLLVQIPIFFFTVIVMLI) threads the bilayer. At 230-314 (TYTKILQALN…ERQKRVFKMS (85 aa)) the chain is on the cytoplasmic side. The helical transmembrane segment at 315-335 (LLIISTFLLCWTPISVLNTTI) threads the bilayer. Residues 336–348 (LCLGPSDLLVKLR) lie on the Extracellular side of the membrane. The chain crosses the membrane as a helical span at residues 349–369 (LCFLVMAYGTTIFHPLLYAFT). Residues 370–432 (RQKFQKVLKS…KCLVPQVVTD (63 aa)) are Cytoplasmic-facing.

This sequence belongs to the G-protein coupled receptor 1 family. As to expression, abundant levels detected in the brain and heart and no detectable expression in other peripheral tissues.

The protein localises to the cell membrane. Its function is as follows. Orphan G-protein coupled receptor. Seems to act through a G(i)/G(o) mediated pathway. May be involved in ciliogenesis. This Mus musculus (Mouse) protein is G-protein coupled receptor 22 (Gpr22).